We begin with the raw amino-acid sequence, 432 residues long: 5'-deoxyadenosine deaminase (432 aa).

The Zn(2+) site is built by His63 and His65. Glu92 and His184 together coordinate substrate. His211 contributes to the Zn(2+) binding site. Glu214 and Asp299 together coordinate substrate. Asp299 lines the Zn(2+) pocket.

Belongs to the metallo-dependent hydrolases superfamily. MTA/SAH deaminase family. Homotetramer. Requires Zn(2+) as cofactor.

The enzyme catalyses 5'-deoxyadenosine + H2O + H(+) = 5'-deoxyinosine + NH4(+). The catalysed reaction is S-adenosyl-L-homocysteine + H2O + H(+) = S-inosyl-L-homocysteine + NH4(+). It carries out the reaction S-methyl-5'-thioadenosine + H2O + H(+) = S-methyl-5'-thioinosine + NH4(+). It catalyses the reaction adenosine + H2O + H(+) = inosine + NH4(+). Its pathway is amino-acid biosynthesis; S-adenosyl-L-methionine biosynthesis. Functionally, catalyzes the deamination of three SAM-derived enzymatic products, namely 5'-deoxyadenosine, S-adenosyl-L-homocysteine, and 5'-methylthioadenosine, to produce the inosine analogs. Can also deaminate adenosine. The preferred substrate for this enzyme is 5'-deoxyadenosine, but all these substrates are efficiently deaminated. Likely functions in a S-adenosyl-L-methionine (SAM) recycling pathway from S-adenosyl-L-homocysteine (SAH) produced from SAM-dependent methylation reactions. May also be involved in the recycling of 5'-deoxyadenosine, whereupon the 5'-deoxyribose moiety of 5'-deoxyinosine is further metabolized to deoxyhexoses used for the biosynthesis of aromatic amino acids in methanogens. This is 5'-deoxyadenosine deaminase from Methanosarcina mazei (strain ATCC BAA-159 / DSM 3647 / Goe1 / Go1 / JCM 11833 / OCM 88) (Methanosarcina frisia).